The primary structure comprises 566 residues: Probable F-box protein At5g39490 (566 aa).

The region spanning 8–54 (ACLLLMLPEDIFVVISRFLSPSDICNLILCGKSLRALVDSEKTWLVQ) is the F-box domain. Positions 318–338 (LRKSSSSKNTTPSQSEIRHSN) are disordered. Over residues 320–332 (KSSSSKNTTPSQS) the composition is skewed to low complexity.

This chain is Probable F-box protein At5g39490, found in Arabidopsis thaliana (Mouse-ear cress).